A 291-amino-acid polypeptide reads, in one-letter code: ATP synthase gamma chain (291 aa).

Belongs to the ATPase gamma chain family. As to quaternary structure, F-type ATPases have 2 components, CF(1) - the catalytic core - and CF(0) - the membrane proton channel. CF(1) has five subunits: alpha(3), beta(3), gamma(1), delta(1), epsilon(1). CF(0) has three main subunits: a, b and c.

The protein resides in the cell membrane. Its function is as follows. Produces ATP from ADP in the presence of a proton gradient across the membrane. The gamma chain is believed to be important in regulating ATPase activity and the flow of protons through the CF(0) complex. In Streptococcus equinus (Streptococcus bovis), this protein is ATP synthase gamma chain.